A 385-amino-acid chain; its full sequence is S-adenosylmethionine synthase (385 aa).

ATP is bound at residue H16. D18 is a binding site for Mg(2+). E44 contacts K(+). Positions 57 and 100 each coordinate L-methionine. A flexible loop region spans residues 100–110; the sequence is QSPDINQGVDR. Residues 164–166, 230–231, D239, 245–246, A262, and K266 contribute to the ATP site; these read DGK, KF, and RK. D239 contacts L-methionine. K270 serves as a coordination point for L-methionine.

It belongs to the AdoMet synthase family. In terms of assembly, homotetramer; dimer of dimers. The cofactor is Mg(2+). K(+) is required as a cofactor.

The protein resides in the cytoplasm. The catalysed reaction is L-methionine + ATP + H2O = S-adenosyl-L-methionine + phosphate + diphosphate. It participates in amino-acid biosynthesis; S-adenosyl-L-methionine biosynthesis; S-adenosyl-L-methionine from L-methionine: step 1/1. In terms of biological role, catalyzes the formation of S-adenosylmethionine (AdoMet) from methionine and ATP. The overall synthetic reaction is composed of two sequential steps, AdoMet formation and the subsequent tripolyphosphate hydrolysis which occurs prior to release of AdoMet from the enzyme. This chain is S-adenosylmethionine synthase, found in Helicobacter acinonychis (strain Sheeba).